The primary structure comprises 90 residues: Small ribosomal subunit protein bS16 (90 aa).

The protein belongs to the bacterial ribosomal protein bS16 family.

This Lactobacillus acidophilus (strain ATCC 700396 / NCK56 / N2 / NCFM) protein is Small ribosomal subunit protein bS16.